We begin with the raw amino-acid sequence, 61 residues long: UPF0434 protein Bfl377 (61 aa).

The protein belongs to the UPF0434 family.

The chain is UPF0434 protein Bfl377 from Blochmanniella floridana.